The sequence spans 644 residues: Phosphatidylinositol polyphosphate 5-phosphatase type IV (644 aa).

The segment at 1-193 (MPSKAENLRP…RLPSLLPPRP (193 aa)) is disordered. 8 repeat units span residues 10–13 (PSEP), 15–18 (PQPP), 28–31 (PGAP), 39–42 (PPDA), 55–58 (PATP), 69–71 (PIA), 72–74 (PRP), and 75–78 (PARP). The tract at residues 10–242 (PSEPAPQPPE…SLGPGRPRSP (233 aa)) is 13 X 4 AA repeats of P-X-X-P. The span at 78–90 (PRLERALSLDDKG) shows a compositional bias: basic and acidic residues. The residue at position 99 (serine 99) is a Phosphoserine. Over residues 107–118 (NGTSPSRGSVQS) the composition is skewed to polar residues. Copy 9 of the repeat occupies 121–124 (PGAP). Over residues 152-163 (GSPSSGGNPLSG) the composition is skewed to low complexity. Repeat copies occupy residues 169–172 (PNLP), 183–185 (PRL), 190–193 (PPRP), and 236–239 (PGRP). Phosphoserine occurs at positions 241 and 256. Cysteine 641 is modified (cysteine methyl ester). The S-farnesyl cysteine moiety is linked to residue cysteine 641. Positions 642-644 (SVS) are cleaved as a propeptide — removed in mature form.

It belongs to the inositol 1,4,5-trisphosphate 5-phosphatase type IV family. In terms of assembly, interacts (when prenylated) with PDE6D; this is important for normal location in cilia. As to expression, detected in brain, heart, pancreas, testis and spleen.

The protein resides in the cytoplasm. It is found in the cytoskeleton. Its subcellular location is the cilium axoneme. It localises to the golgi apparatus. The protein localises to the golgi stack membrane. The protein resides in the cell membrane. It is found in the cell projection. Its subcellular location is the ruffle. It localises to the nucleus. It catalyses the reaction a 1,2-diacyl-sn-glycero-3-phospho-(1D-myo-inositol-4,5-bisphosphate) + H2O = a 1,2-diacyl-sn-glycero-3-phospho-(1D-myo-inositol 4-phosphate) + phosphate. It carries out the reaction a 1,2-diacyl-sn-glycero-3-phospho-(1D-myo-inositol-3,4,5-trisphosphate) + H2O = a 1,2-diacyl-sn-glycero-3-phospho-(1D-myo-inositol-3,4-bisphosphate) + phosphate. The catalysed reaction is a 1,2-diacyl-sn-glycero-3-phospho-(1D-myo-inositol-3,5-bisphosphate) + H2O = a 1,2-diacyl-sn-glycero-3-phospho-(1D-myo-inositol-3-phosphate) + phosphate. Active in the presence of octyl-glucoside or Triton X-100, but completely inhibited by CTAB. Its function is as follows. Phosphatidylinositol (PtdIns) phosphatase that specifically hydrolyzes the 5-phosphate of phosphatidylinositol-3,4,5-trisphosphate (PtdIns(3,4,5)P3), phosphatidylinositol 4,5-bisphosphate (PtdIns(4,5)P2) and phosphatidylinositol 3,5-bisphosphate (PtdIns(3,5)P2). Specific for lipid substrates, inactive towards water soluble inositol phosphates. Plays an essential role in the primary cilium by controlling ciliary growth and phosphoinositide 3-kinase (PI3K) signaling and stability. This chain is Phosphatidylinositol polyphosphate 5-phosphatase type IV (INPP5E), found in Homo sapiens (Human).